A 752-amino-acid chain; its full sequence is Polyribonucleotide nucleotidyltransferase (752 aa).

Mg(2+) is bound by residues Asp-529 and Asp-535. In terms of domain architecture, KH spans 595-654 (PRVTTIKVPVDKIGEVIGPKGKVINAITEETGAQISIEDDGTVFVGATDGPSAQAAIDKI). In terms of domain architecture, S1 motif spans 666–735 (GERFLGTVVK…KRGKISLILV (70 aa)).

The protein belongs to the polyribonucleotide nucleotidyltransferase family. Mg(2+) is required as a cofactor.

Its subcellular location is the cytoplasm. It catalyses the reaction RNA(n+1) + phosphate = RNA(n) + a ribonucleoside 5'-diphosphate. Involved in mRNA degradation. Catalyzes the phosphorolysis of single-stranded polyribonucleotides processively in the 3'- to 5'-direction. The polypeptide is Polyribonucleotide nucleotidyltransferase (Mycobacterium tuberculosis (strain ATCC 25177 / H37Ra)).